A 298-amino-acid chain; its full sequence is Foldase protein PrsA 1 (298 aa).

Residues 1–19 form the signal peptide; it reads MKKWLIALAGVLLTFTLAG. Cysteine 20 carries N-palmitoyl cysteine lipidation. Residue cysteine 20 is the site of S-diacylglycerol cysteine attachment. One can recognise a PpiC domain in the interval 136 to 232; sequence EPKVTVQHIL…NGYEIIRMIK (97 aa).

It belongs to the PrsA family.

The protein localises to the cell membrane. The enzyme catalyses [protein]-peptidylproline (omega=180) = [protein]-peptidylproline (omega=0). In terms of biological role, plays a major role in protein secretion by helping the post-translocational extracellular folding of several secreted proteins. The polypeptide is Foldase protein PrsA 1 (prsA1) (Lactiplantibacillus plantarum (strain ATCC BAA-793 / NCIMB 8826 / WCFS1) (Lactobacillus plantarum)).